The primary structure comprises 143 residues: High mobility group protein B (143 aa).

A disordered region spans residues 1-22; sequence MSKAASQYATLEDLPSKPKRPQ. Residues 18–86 constitute a DNA-binding region (HMG box); it reads PKRPQTGFFI…TYDKQNDQWK (69 aa). The residue at position 70 (A70) is a Blocked amino end (Ala). 2 stretches are compositionally biased toward basic and acidic residues: residues 100-120 and 131-143; these read AKKA…ELEK and AKKD…AKKK. Positions 100–143 are disordered; sequence AKKALKEKTKKSKAAEKELEKSKKKAPAAAPAKKDDKKAPAKKK.

The protein resides in the nucleus. Its subcellular location is the chromosome. The protein is High mobility group protein B of Tetrahymena thermophila.